We begin with the raw amino-acid sequence, 478 residues long: MTANVLFPLFANLHDRAVLVVGGGKVAERKTEALLKVGALPIIGAPSLTASLQRWAETGRITWRQGTFENSWLQEDIWLVIAATDQPEVNHAAARAAHAQRLFVNVVDDIALSNVQVPAVVERGPLRIAISSGGGAPMVARYLRQQLESLIDDSWGRLTTLFAQRRDTIRARYPNIEARRRFFETQLAGPLQRLLRKQRHAEAEAVLEAALAKTPPTESGSVTLVGAGAGDAGLLTLNALRALNEADIILYDRLVSDTVLQMARRDAEQIEVGKSATGHSVRQEDIHTLMLQHARAGQRVVRLKGGDPFVFGRGGEELEFLRTHGIPYEVIPGITAALACAAYAGIPLTHRDHAQSLCLITAHCQSSLDTLNWAALAQERQTLAFYMGVAGLPTIQQRLCEAGRTETTPFALIENGARAQQRVLTGTLKTLAHTAQTYAVRPPALLILGEVTALAEHLHWFGTTPLSAPCPPRTHPIS.

Residues 1–207 (MTANVLFPLF…QRHAEAEAVL (207 aa)) form a precorrin-2 dehydrogenase /sirohydrochlorin ferrochelatase region. NAD(+) contacts are provided by residues 25–26 (KV) and 46–47 (PS). Serine 132 carries the phosphoserine modification. The interval 220-478 (GSVTLVGAGA…PCPPRTHPIS (259 aa)) is uroporphyrinogen-III C-methyltransferase. Residue aspartate 252 is the Proton acceptor of the active site. The active-site Proton donor is the lysine 274. S-adenosyl-L-methionine is bound by residues 305 to 307 (GGD), valine 310, 335 to 336 (TA), methionine 387, and glycine 416.

This sequence in the N-terminal section; belongs to the precorrin-2 dehydrogenase / sirohydrochlorin ferrochelatase family. It in the C-terminal section; belongs to the precorrin methyltransferase family.

The enzyme catalyses uroporphyrinogen III + 2 S-adenosyl-L-methionine = precorrin-2 + 2 S-adenosyl-L-homocysteine + H(+). It catalyses the reaction precorrin-2 + NAD(+) = sirohydrochlorin + NADH + 2 H(+). It carries out the reaction siroheme + 2 H(+) = sirohydrochlorin + Fe(2+). It participates in cofactor biosynthesis; adenosylcobalamin biosynthesis; precorrin-2 from uroporphyrinogen III: step 1/1. It functions in the pathway cofactor biosynthesis; adenosylcobalamin biosynthesis; sirohydrochlorin from precorrin-2: step 1/1. Its pathway is porphyrin-containing compound metabolism; siroheme biosynthesis; precorrin-2 from uroporphyrinogen III: step 1/1. The protein operates within porphyrin-containing compound metabolism; siroheme biosynthesis; siroheme from sirohydrochlorin: step 1/1. It participates in porphyrin-containing compound metabolism; siroheme biosynthesis; sirohydrochlorin from precorrin-2: step 1/1. Functionally, multifunctional enzyme that catalyzes the SAM-dependent methylations of uroporphyrinogen III at position C-2 and C-7 to form precorrin-2 via precorrin-1. Then it catalyzes the NAD-dependent ring dehydrogenation of precorrin-2 to yield sirohydrochlorin. Finally, it catalyzes the ferrochelation of sirohydrochlorin to yield siroheme. This chain is Siroheme synthase, found in Xylella fastidiosa (strain M23).